We begin with the raw amino-acid sequence, 371 residues long: Probable palmitoyltransferase ZDHHC11B (371 aa).

Helical transmembrane passes span Val-43–Leu-63 and Tyr-70–Ala-90. Positions Gln-125–Ala-175 constitute a DHHC domain. Catalysis depends on Cys-155, which acts as the S-palmitoyl cysteine intermediate. Helical transmembrane passes span Ala-177–Val-197, Thr-216–Ile-236, and Leu-239–Ile-259. The segment at Asp-335 to Asp-371 is disordered. A compositionally biased stretch (polar residues) spans Pro-347–Thr-359. Residues Glu-360–Asp-371 are compositionally biased toward basic and acidic residues.

Belongs to the DHHC palmitoyltransferase family.

Its subcellular location is the membrane. The enzyme catalyses L-cysteinyl-[protein] + hexadecanoyl-CoA = S-hexadecanoyl-L-cysteinyl-[protein] + CoA. Its function is as follows. Probable palmitoyltransferase that could catalyze the addition of palmitate onto various protein substrates and be involved in a variety of cellular processes. May play a role in cell proliferation. The protein is Probable palmitoyltransferase ZDHHC11B of Homo sapiens (Human).